The sequence spans 309 residues: NAD-dependent protein deacylase sirtuin-5, mitochondrial (309 aa).

Residues 1–35 (MILLPFHTRRLVSHVYCGLKPASKKKGIALEMARP) constitute a mitochondrion transit peptide. A Deacetylase sirtuin-type domain is found at 36–306 (SSNLADFREA…PPAIARHETE (271 aa)). 57–76 (GAGVSAESGVPTFRGAGGYW) contacts NAD(+). The substrate site is built by Y101 and R104. 139 to 142 (QNID) provides a ligand contact to NAD(+). H157 functions as the Proton acceptor in the catalytic mechanism. Zn(2+)-binding residues include C165, C168, C206, and C211. NAD(+)-binding positions include 248–250 (GTS), 274–276 (NME), and C292.

The protein belongs to the sirtuin family. Class III subfamily. Zn(2+) is required as a cofactor.

Its subcellular location is the mitochondrion. It localises to the cytoplasm. It is found in the cytosol. The protein resides in the nucleus. It carries out the reaction N(6)-malonyl-L-lysyl-[protein] + NAD(+) + H2O = 2''-O-malonyl-ADP-D-ribose + nicotinamide + L-lysyl-[protein]. The catalysed reaction is N(6)-succinyl-L-lysyl-[protein] + NAD(+) + H2O = 2''-O-succinyl-ADP-D-ribose + nicotinamide + L-lysyl-[protein]. The enzyme catalyses N(6)-glutaryl-L-lysyl-[protein] + NAD(+) + H2O = 2''-O-glutaryl-ADP-D-ribose + nicotinamide + L-lysyl-[protein]. Functionally, NAD-dependent lysine demalonylase, desuccinylase and deglutarylase that specifically removes malonyl, succinyl and glutaryl groups on target proteins. Has weak NAD-dependent protein deacetylase activity; however this activity may not be physiologically relevant in vivo. This Xenopus tropicalis (Western clawed frog) protein is NAD-dependent protein deacylase sirtuin-5, mitochondrial (sirt5).